A 299-amino-acid polypeptide reads, in one-letter code: Taste receptor type 2 member 50 (299 aa).

M1 is a topological domain (extracellular). The helical transmembrane segment at 2–22 (ITFLYIFFSILILVLFVLGNF) threads the bilayer. The Cytoplasmic portion of the chain corresponds to 23–55 (ANGFIALVNFIDWVKRKKISSADQILTALAVSR). Residues 56–76 (IGLLWALLLNWYLTVLNPAFY) form a helical membrane-spanning segment. Over 77-87 (SVELRITSYNA) the chain is Extracellular. Residues 88–108 (WVVTNHFSMWLAASLSIFYLL) traverse the membrane as a helical segment. Residues 109 to 126 (KIANFSNLIFLHLKRRVR) are Cytoplasmic-facing. Residues 127–147 (SVILVILLGTLIFLVCHLLVA) traverse the membrane as a helical segment. Residues 148–181 (NMDESMWAEEYEGNMTGKMKLRNTVHLSYLTVTT) are Extracellular-facing. N-linked (GlcNAc...) asparagine glycosylation occurs at N161. A helical transmembrane segment spans residues 182–202 (LWSFIPFTLSLISFLMLICSL). At 203–229 (CKHLKKMQLHGEGSQDLSTKVHIKALQ) the chain is on the cytoplasmic side. Residues 230–250 (TLISFLLLCAIFFLFLIISVW) form a helical membrane-spanning segment. Over 251–259 (SPRRLQNDP) the chain is Extracellular. A helical transmembrane segment spans residues 260–280 (VVMVSKAVGNIYLAFDSFILI). Residues 281–299 (WRTKKLKHTFLLILCQIRC) lie on the Cytoplasmic side of the membrane.

This sequence belongs to the G-protein coupled receptor T2R family.

The protein localises to the membrane. Functionally, receptor that may play a role in the perception of bitterness and is gustducin-linked. May play a role in sensing the chemical composition of the gastrointestinal content. The activity of this receptor may stimulate alpha gustducin, mediate PLC-beta-2 activation and lead to the gating of TRPM5. This is Taste receptor type 2 member 50 (TAS2R50) from Gorilla gorilla gorilla (Western lowland gorilla).